We begin with the raw amino-acid sequence, 131 residues long: GFLGGGYGGGLGLGGYGGGYGLGGGLGGGLGGIGLAAAPAVGIAAAPAIGIAAAPATLVRTRVVPGPARLVQPPPVVQKQVIQPPPIVQTRLIQPPAQLVQGPPQVIHEQTPALIKTAVPAPSFGYKSLLH.

3 consecutive repeat copies span residues 37 to 40 (AAPA), 45 to 48 (AAPA), and 53 to 56 (AAPA).

Its function is as follows. Component of the cuticle of migratory locust which contains more than 100 different structural proteins. This is Cuticle protein 79, isoform A from Locusta migratoria (Migratory locust).